We begin with the raw amino-acid sequence, 487 residues long: Glutamyl-tRNA(Gln) amidotransferase subunit A (487 aa).

Catalysis depends on charge relay system residues Lys78 and Ser153. Residue Ser177 is the Acyl-ester intermediate of the active site.

It belongs to the amidase family. GatA subfamily. In terms of assembly, heterotrimer of A, B and C subunits.

It carries out the reaction L-glutamyl-tRNA(Gln) + L-glutamine + ATP + H2O = L-glutaminyl-tRNA(Gln) + L-glutamate + ADP + phosphate + H(+). In terms of biological role, allows the formation of correctly charged Gln-tRNA(Gln) through the transamidation of misacylated Glu-tRNA(Gln) in organisms which lack glutaminyl-tRNA synthetase. The reaction takes place in the presence of glutamine and ATP through an activated gamma-phospho-Glu-tRNA(Gln). This is Glutamyl-tRNA(Gln) amidotransferase subunit A from Oenococcus oeni (strain ATCC BAA-331 / PSU-1).